We begin with the raw amino-acid sequence, 273 residues long: Dermonecrotic toxin (273 aa).

Residues Glu20 and Asp22 each contribute to the Mg(2+) site. His35 functions as the Nucleophile in the catalytic mechanism. Cys39 and Cys45 form a disulfide bridge. Asp79 serves as a coordination point for Mg(2+).

This sequence belongs to the arthropod phospholipase D family. Class I subfamily. Mg(2+) is required as a cofactor. In terms of tissue distribution, expressed by the venom gland.

It localises to the secreted. The enzyme catalyses an N-(acyl)-sphingosylphosphocholine = an N-(acyl)-sphingosyl-1,3-cyclic phosphate + choline. The catalysed reaction is an N-(acyl)-sphingosylphosphoethanolamine = an N-(acyl)-sphingosyl-1,3-cyclic phosphate + ethanolamine. It catalyses the reaction a 1-acyl-sn-glycero-3-phosphocholine = a 1-acyl-sn-glycero-2,3-cyclic phosphate + choline. It carries out the reaction a 1-acyl-sn-glycero-3-phosphoethanolamine = a 1-acyl-sn-glycero-2,3-cyclic phosphate + ethanolamine. Its function is as follows. Dermonecrotic toxins cleave the phosphodiester linkage between the phosphate and headgroup of certain phospholipids (sphingolipid and lysolipid substrates), forming an alcohol (often choline) and a cyclic phosphate. This toxin acts on sphingomyelin (SM). It may also act on ceramide phosphoethanolamine (CPE), lysophosphatidylcholine (LPC) and lysophosphatidylethanolamine (LPE), but not on lysophosphatidylserine (LPS), and lysophosphatidylglycerol (LPG). It acts by transphosphatidylation, releasing exclusively cyclic phosphate products as second products. Induces dermonecrosis, hemolysis, increased vascular permeability, edema, inflammatory response, and platelet aggregation. The polypeptide is Dermonecrotic toxin (Loxosceles laeta (South American recluse spider)).